The following is a 119-amino-acid chain: Large ribosomal subunit protein uL18 (119 aa).

Belongs to the universal ribosomal protein uL18 family. As to quaternary structure, part of the 50S ribosomal subunit; part of the 5S rRNA/L5/L18/L25 subcomplex. Contacts the 5S and 23S rRNAs.

Its function is as follows. This is one of the proteins that bind and probably mediate the attachment of the 5S RNA into the large ribosomal subunit, where it forms part of the central protuberance. The sequence is that of Large ribosomal subunit protein uL18 from Xanthomonas campestris pv. campestris (strain 8004).